Here is a 472-residue protein sequence, read N- to C-terminus: Probable diguanylate cyclase DgcF (472 aa).

8 consecutive transmembrane segments (helical) span residues 21 to 41, 44 to 64, 90 to 110, 128 to 148, 167 to 187, 198 to 218, 237 to 257, and 273 to 293; these read SIAI…LRLV, LSLF…YVWL, VSLA…LLVV, LFNY…IGSV, FSTG…GVLP, IALI…SLAF, LLTF…VIDI, and LGIA…AAIN. A GGDEF domain is found at 330-467; the sequence is QHLTVMLLDI…GRNRTSTMRY (138 aa). Mg(2+) contacts are provided by D338 and I339. 3 residues coordinate substrate: N346, H351, and D355. A Mg(2+)-binding site is contributed by E381.

As to quaternary structure, homodimer. It depends on Mg(2+) as a cofactor.

It is found in the cell membrane. It catalyses the reaction 2 GTP = 3',3'-c-di-GMP + 2 diphosphate. It functions in the pathway purine metabolism; 3',5'-cyclic di-GMP biosynthesis. Its function is as follows. Catalyzes the synthesis of cyclic-di-GMP (c-di-GMP) via the condensation of 2 GTP molecules. The protein is Probable diguanylate cyclase DgcF of Escherichia coli O157:H7.